A 292-amino-acid chain; its full sequence is Short chain dehydrogenases/reductase notP' (292 aa).

Residues Met-1–Ser-25 form a disordered region. Positions 48, 97, 158, 193, 197, 230, and 232 each coordinate NADP(+). The active-site Proton donor is Tyr-193. Lys-197 serves as the catalytic Lowers pKa of active site Tyr.

Belongs to the short-chain dehydrogenases/reductases (SDR) family.

Its function is as follows. Short chain dehydrogenases/reductase; part of the gene cluster that mediates the biosynthesis of notoamide, a fungal indole alkaloid that belongs to a family of natural products containing a characteristic bicyclo[2.2.2]diazaoctane core. The first step of notoamide biosynthesis involves coupling of L-proline and L-tryptophan by the bimodular NRPS notE', to produce cyclo-L-tryptophan-L-proline called brevianamide F. The reverse prenyltransferase notF' then acts as a deoxybrevianamide E synthase and converts brevianamide F to deoxybrevianamide E via reverse prenylation at C-2 of the indole ring leading to the bicyclo[2.2.2]diazaoctane core. Deoxybrevianamide E is further hydroxylated at C-6 of the indole ring, likely catalyzed by the cytochrome P450 monooxygenase notG', to yield 6-hydroxy-deoxybrevianamide E. 6-hydroxy-deoxybrevianamide E is a specific substrate of the prenyltransferase notC' for normal prenylation at C-7 to produce 6-hydroxy-7-prenyl-deoxybrevianamide, also called notoamide S. As the proposed pivotal branching point in notoamide biosynthesis, notoamide S can be diverted to notoamide E through an oxidative pyran ring closure putatively catalyzed by either notH' cytochrome P450 monooxygenase or the notD' FAD-linked oxidoreductase. This step would be followed by an indole 2,3-epoxidation-initiated pinacol-like rearrangement catalyzed by the notB' FAD-dependent monooxygenase leading to the formation of notoamide C and notoamide D. On the other hand notoamide S is converted to notoamide T by notH' (or notD'), a bifunctional oxidase that also functions as the intramolecular Diels-Alderase responsible for generation of (-)-notoamide T. To generate antipodal (+)-notoaminide T, notH (or notD) in Aspergillus strain MF297-2 is expected to catalyze a Diels-Alder reaction leading to the opposite stereochemistry. The remaining oxidoreductase notD' (or notH') likely catalyzes the oxidative pyran ring formation to yield (-)-stephacidin A. The FAD-dependent monooxygenase notI' is highly similar to notB' and is predicted to catalyze a similar conversion from (-)-stephacidin A to (+)-notoamide B via the 2,3-epoxidation of (-)-stephacidin A followed by a pinacol-type rearrangement. Finally, it remains unclear which enzyme could be responsible for the final hydroxylation steps leading to notoamide A and sclerotiamide. The function of notP' in the notoamide biosynthesis has not been determined yet. The sequence is that of Short chain dehydrogenases/reductase notP' from Aspergillus versicolor.